A 211-amino-acid polypeptide reads, in one-letter code: Mediator of RNA polymerase II transcription subunit 20 (211 aa).

Belongs to the Mediator complex subunit 20 family. In terms of assembly, component of the Mediator complex.

Its subcellular location is the nucleus. In terms of biological role, component of the Mediator complex, a coactivator involved in the regulated transcription of nearly all RNA polymerase II-dependent genes. Mediator functions as a bridge to convey information from gene-specific regulatory proteins to the basal RNA polymerase II transcription machinery. Mediator is recruited to promoters by direct interactions with regulatory proteins and serves as a scaffold for the assembly of a functional preinitiation complex with RNA polymerase II and the general transcription factors. The polypeptide is Mediator of RNA polymerase II transcription subunit 20 (MED20) (Gallus gallus (Chicken)).